A 381-amino-acid chain; its full sequence is MPAPFPEDSVGLVTPQLFHFDQPLALANGRSLDSYELMVETYGELNAEKSNGILICHALSGSHHVAGYHSEDDKKPGWWEHYVGPGKPIDTNRFYVVCMNNIGGCHGSTGPQSINPATGKPWGSSFPFLRVRDWVETQVRLADRLGINQWAAVVGGSLGGMQAMRWALEHPNRLRHCVVIASAMNLTAQNIAFNETARQAIQSDPNFFNGDYLAQSTLPKRGLSVARMIGHITYLSDDGMGKKFGRELRSGSFDRGNDQLVEFQIESYLRYQGSTFSEVFDANTYILMTRALDYFDLAREYNGDAAEAFKQASCKFLVVSFTSDWRFAPERSREIVTALMRANRDVVYGEIDSVHGHDAFLVPNQLRYWELFSAYMNRVEV.

Residues 53–361 (ILICHALSGS…DSVHGHDAFL (309 aa)) enclose the AB hydrolase-1 domain. The active-site Nucleophile is Ser157. Arg227 serves as a coordination point for substrate. Catalysis depends on residues Asp324 and His357. Asp358 is a binding site for substrate.

This sequence belongs to the AB hydrolase superfamily. MetX family. In terms of assembly, homodimer.

The protein resides in the cytoplasm. It catalyses the reaction L-homoserine + succinyl-CoA = O-succinyl-L-homoserine + CoA. Its pathway is amino-acid biosynthesis; L-methionine biosynthesis via de novo pathway; O-succinyl-L-homoserine from L-homoserine: step 1/1. Functionally, transfers a succinyl group from succinyl-CoA to L-homoserine, forming succinyl-L-homoserine. This chain is Homoserine O-succinyltransferase, found in Saccharophagus degradans (strain 2-40 / ATCC 43961 / DSM 17024).